The chain runs to 431 residues: Phosphomethylpyrimidine synthase (431 aa).

Substrate-binding positions include Asn-66, Met-95, Tyr-124, His-163, 185–187 (SRG), 226–229 (DGLR), and Glu-265. A Zn(2+)-binding site is contributed by His-269. Tyr-292 is a substrate binding site. His-333 lines the Zn(2+) pocket. [4Fe-4S] cluster contacts are provided by Cys-408, Cys-411, and Cys-415.

The protein belongs to the ThiC family. It depends on [4Fe-4S] cluster as a cofactor.

The enzyme catalyses 5-amino-1-(5-phospho-beta-D-ribosyl)imidazole + S-adenosyl-L-methionine = 4-amino-2-methyl-5-(phosphooxymethyl)pyrimidine + CO + 5'-deoxyadenosine + formate + L-methionine + 3 H(+). It functions in the pathway cofactor biosynthesis; thiamine diphosphate biosynthesis. Functionally, catalyzes the synthesis of the hydroxymethylpyrimidine phosphate (HMP-P) moiety of thiamine from aminoimidazole ribotide (AIR) in a radical S-adenosyl-L-methionine (SAM)-dependent reaction. The polypeptide is Phosphomethylpyrimidine synthase (Dehalococcoides mccartyi (strain CBDB1)).